Reading from the N-terminus, the 418-residue chain is LL-diaminopimelate aminotransferase (418 aa).

Substrate is bound by residues Tyr-25 and Gly-52. Pyridoxal 5'-phosphate contacts are provided by residues Tyr-78, 115–116, Tyr-140, Asn-190, Tyr-221, and 248–250; these read SK and SFS. Substrate contacts are provided by Lys-116, Tyr-140, and Asn-190. Lys-251 is modified (N6-(pyridoxal phosphate)lysine). Residue Arg-259 participates in pyridoxal 5'-phosphate binding.

Belongs to the class-I pyridoxal-phosphate-dependent aminotransferase family. As to quaternary structure, homodimer. It depends on pyridoxal 5'-phosphate as a cofactor.

The protein localises to the cytoplasm. It carries out the reaction (2S,6S)-2,6-diaminopimelate + 2-oxoglutarate = (S)-2,3,4,5-tetrahydrodipicolinate + L-glutamate + H2O + H(+). Its pathway is amino-acid biosynthesis; L-lysine biosynthesis via DAP pathway; LL-2,6-diaminopimelate from (S)-tetrahydrodipicolinate (aminotransferase route): step 1/1. Its function is as follows. Involved in the synthesis of meso-diaminopimelate (m-DAP or DL-DAP), required for both lysine and peptidoglycan biosynthesis. Catalyzes the direct conversion of tetrahydrodipicolinate to LL-diaminopimelate, a reaction that requires three enzymes in E.coli. In Methanocaldococcus jannaschii (strain ATCC 43067 / DSM 2661 / JAL-1 / JCM 10045 / NBRC 100440) (Methanococcus jannaschii), this protein is LL-diaminopimelate aminotransferase (dapL).